A 485-amino-acid chain; its full sequence is Glutamyl-tRNA(Gln) amidotransferase subunit A (485 aa).

Residues Lys-79 and Ser-154 each act as charge relay system in the active site. Residue Ser-178 is the Acyl-ester intermediate of the active site.

Belongs to the amidase family. GatA subfamily. In terms of assembly, heterotrimer of A, B and C subunits.

It catalyses the reaction L-glutamyl-tRNA(Gln) + L-glutamine + ATP + H2O = L-glutaminyl-tRNA(Gln) + L-glutamate + ADP + phosphate + H(+). Its function is as follows. Allows the formation of correctly charged Gln-tRNA(Gln) through the transamidation of misacylated Glu-tRNA(Gln) in organisms which lack glutaminyl-tRNA synthetase. The reaction takes place in the presence of glutamine and ATP through an activated gamma-phospho-Glu-tRNA(Gln). This chain is Glutamyl-tRNA(Gln) amidotransferase subunit A, found in Staphylococcus aureus.